The sequence spans 326 residues: Undecaprenyl-phosphate 4-deoxy-4-formamido-L-arabinose transferase (326 aa).

2 helical membrane passes run 236 to 256 (LSVV…LLIV) and 270 to 290 (VFTL…AMGL).

Belongs to the glycosyltransferase 2 family.

It is found in the cell inner membrane. It carries out the reaction UDP-4-deoxy-4-formamido-beta-L-arabinose + di-trans,octa-cis-undecaprenyl phosphate = 4-deoxy-4-formamido-alpha-L-arabinopyranosyl di-trans,octa-cis-undecaprenyl phosphate + UDP. It functions in the pathway glycolipid biosynthesis; 4-amino-4-deoxy-alpha-L-arabinose undecaprenyl phosphate biosynthesis; 4-amino-4-deoxy-alpha-L-arabinose undecaprenyl phosphate from UDP-4-deoxy-4-formamido-beta-L-arabinose and undecaprenyl phosphate: step 1/2. It participates in bacterial outer membrane biogenesis; lipopolysaccharide biosynthesis. In terms of biological role, catalyzes the transfer of 4-deoxy-4-formamido-L-arabinose from UDP to undecaprenyl phosphate. The modified arabinose is attached to lipid A and is required for resistance to polymyxin and cationic antimicrobial peptides. In Proteus mirabilis (strain HI4320), this protein is Undecaprenyl-phosphate 4-deoxy-4-formamido-L-arabinose transferase.